Reading from the N-terminus, the 3788-residue chain is MSTDSNSLAREFLIDVNQLCNAVVQRAEAREEEEEETHMATLGQYLVHGRGFLLLTKLNSIIDQALTCREELLTLLLSLLPLVWKIPVQEQQATDFNLPLSSDIILTKEKNSSLQKSTQGKLYLEGSAPSGQVSAKVNLFRKIRRQRKSTHRYSVRDARKTQLSTSDSEGNSDEKSTVVSKHRRLHALPRFLTQSPKEGHLVAKPDPSATKEQVLSDTMSVENSREVILRQDSNGDILSEPAALSILSNMNNSPFDLCHVLLSLLEKVCKFDIALNHNSSLALSVVPTLTEFLAGFGDCCNQSDTLEGQLVSAGWTEEPVALVQRMLFRTVLHLMSVDVSTAEAMPESLRKNLTELLRAALKIRACLEKQPEPFSPRQKKTLQEVQEGFVFSKYRHRALLLPELLEGVLQLLISCLQSAASNPFYFSQAMDLVQEFIQHQGFNLFGTAVLQMEWLLTRDGVPSEAAEHLKALINSVIKIMSTVKKVKSEQLHHSMCTRKRHRRCEYSHFMQHHRDLSGLLVSAFKNQLSKSPFEETAEGDVQYPERCCCIAVCAHQCLRLLQQVSLSTTCVQILSGVHSVGICCCMDPKSVIAPLLHAFKLPALKAFQQHILNVLSKLLVDQLGGAELSPRIKKAACNICTVDSDQLAKLGETLQGTLCGAGPTSGLPSPSYRFQGILPSSGSEDLLWKWDALEAYQSFVFQEDRLHNIQIANHICNLLQKGNVVVQWKLYNYIFNPVLQRGVELVHHCQQLSIPSAQTHMCSQLKQYLPQEVLQIYLKTLPVLLKSRVIRDLFLSCNGVNHIIELNYLDGIRSHSLKAFETLIVSLGEQQKDAAVLDVDGLDIQQELPSLSVGPSLHKQQASSDSPCSLRKFYASLREPDPKKRKTIHQDVHINTINLFLCVAFLCVSKEADSDRESANESEDTSGYDSPPSEPLSHMLPCLSLEDVVLPSPECLHHAADIWSMCRWIYMLNSVFQKQFHRLGGFQVCHELIFMIIQKLFRSHTEDQGRRQGEMSRNENQELIRISYPELTLKGDVSSATAPDLGFLRKSADSVRGFQSQPVLPTSAEQIVATESVPGERKAFMSQQSETSLQSIRLLESLLDICLHSARACQQKMELELPSQGLSVENILCELREHLSQSKVAETELAKPLFDALLRVALGNHSADLGPGDAVTEKSHPSEEELLSQPGDFSEEAEDSQCCSLKLLGEEEGYEADSESNPEDVDTQDDGVELNPEAEGFSGSIVSNNLLENLTHGEIIYPEICMLGLNLLSASKAKLDVLAHVFESFLKIVRQKEKNISLLIQQGTVKILLGGFLNILTQTNSDFQACQRVLVDLLVSLMSSRTCSEDLTLLWRIFLEKSPCTEILLLGIHKIVESDFTMSPSQCLTFPFLHTPSLSNGVLSQKPPGILNSKALGLLRRARISRGKKEADRESFPYRLLSSWHIAPIHLPLLGQNCWPHLSEGFSVSLVGLMWNTSNESESAAERGKRVKKRNKPSVLEDSSFEGAEGDRPEVTESINPGDRLIEDGCIHLISLGSKALMIQVWADPHSGTFIFRVCMDSNDDTKAVSLAQVESQENIFFPSKWQHLVLTYIQHPQGKKNVHGEISIWVSGQRKTDVILDFVLPRKTSLSSDSNKTFCMIGHCLTSQEESLQLAGKWDLGNLLLFNGAKIGSQEAFFLYACGPNYTSIMPCKYGQPVIDYSKYINKDILRCDEIRDLFMTKKEVDVGLLIESLSVVYTTCCPAQYTIYEPVIRLKGQVKTQPSQRPFSSKEAQSILLEPSQLKGLQPTECKAIQGILHEIGGAGTFVFLFARVVELSSCEETQALALRVILSLIKYSQQRTQELENCNGLSMIHQVLVKQKCIVGFHILKTLLEGCCGEEVIHVSEHGEFKLDVESHAIIQDVKLLQELLLDWKIWNKAEQGVWETLLAALEVLIRVEHHQQQFNIKQLLNAHVVHHFLLTCQVLQEHREGQLTSMPREVCRSFVKIIAEVLGSPPDLELLTVIFNFLLAVHPPTNTYVCHNPTNFYFSLHIDGKIFQEKVQSLAYLRHSSSGGQAFPSPGFLVISPSAFTAAPPEGTSSSNIVPQRMAAQMVRSRSLPAFPTYLPLIRAQKLAASLGFSVDKLQNIADANPEKQNLLGRPYALKTSKEEAFISSCESAKTVCEMEALLGAHASANGVSRGSPRFPRARVDHKDVGTEPRSDDDSPGDESYPRRPDNLKGLASFQRSQSTVASLGLAFPSQNGSAVASRWPSLVDRNADDWENFTFSPAYEASYNRATSTHSVIEDCLIPICCGLYELLSGVLLVLPDAMLEDVMDRIIQADILLVLVNHPSPAIQQGVIKLLHAYINRASKEQKDKFLKNRGFSLLANQLYLHRGTQELLECFVEMFFGRPIGLDEEFDLEEVKHMELFQKWSVIPVLGLIETSLYDNVLLHNALLLLLQVLNSCSKVADMLLDNGLLYVLCNTVAALNGLEKNIPVNEYKLLACDIQQLFIAVTIHACSSSGTQYFRVIEDLIVLLGYLHNSKNKRTQNMALALQLRVLQAALEFIRSTANHDSESPVHSPSAHRHSVPPKRRSIAGSRKFPLAQTESLLMKMRSVASDELHSMMQRRMSQEHPSQASEAELAQRLQRLTILAVNRIIYQELNSDIIDILRTPENTSQSKTSVSQTEISEEDMHHEQPSVYNPFQKEMLTYLLDGFKVCIGSSKTSVSKQQWTKILGSCKETLRDQLGRLLAHILSPTHTVQERKQILEIVHEPAHQDILRDCLSPSPQHGAKLVLYLSELIHNHQDELSEEEMDTAELLMNALKLCGHKCIPPSAPSKPELIKIIREEQKKYESEESVSKGSWQKTVNNNQQSLFQRLDFKSKDISKIAADITQAVSLSQGIERKKVIQHIRGMYKVDLSASRHWQECIQQLTHDRAVWYDPIYYPTSWQLDPTEGPNRERRRLQRCYLTIPNKYLLRDRQKSEGVLRPPLSYLFEDKTHSSFSSTVKDKAASESIRVNRRCISVAPSRETAGELLLGKCGMYFVEDNASDAVESSSLQGELEPASFSWTYEEIKEVHRRWWQLRDNAVEIFLTNGRTLLLAFDNNKVRDDVYQSILTNNLPNLLEYGNITALTNLWYSGQITNFEYLTHLNKHAGRSFNDLMQYPVFPFILSDYVSETLDLNDPSIYRNLSKPIAVQYKEKEDRYVDTYKYLEEEYRKGAREDDPMPPVQPYHYGSHYSNSGTVLHFLVRMPPFTKMFLAYQDQSFDIPDRTFHSTNTTWRLSSFESMTDVKELIPEFFYLPEFLVNREGFDFGVRQNGERVNHVNLPPWARNDPRLFILIHRQALESDHVSQNICHWIDLVFGYKQKGKASVQAINVFHPATYFGMDVSAVEDPVQRRALETMIKTYGQTPRQLFHTAHASRPGAKLNIEGELPAAVGLLVQFAFRETREPVKEVTHPSPLSWIKGLKWGEYVGSPSAPVPVVCFSQPHGERFGSLQALPTRAICGLSRNFCLLMTYNKEQGVRSMNNTNIQWSAILSWGYADNILRLKSKQSEPPINFIQSSQQHQVTSCAWVPDSCQLFTGSKCGVITAYTNRLTSSTPSEIEMESQMHLYGHTEEITGLCVCKPYSVMISVSRDGTCIVWDLNRLCYVQSLAGHKSPVTAVSASETSGDIATVCDSAGGGSDLRLWTVNGDLVGHVHCREIICSVAFSNQPEGVSINVIAGGLENGIVRLWSTWDLKPVREITFPKSNKPIISLTFSCDGHHLYTANSEGTVIAWCRKDQQRVKLPMFYSFLSSYAAG.

Disordered stretches follow at residues 148–180 (KSTHRYSVRDARKTQLSTSDSEGNSDEKSTVVS) and 198–217 (EGHLVAKPDPSATKEQVLSD). Serine 164 carries the phosphoserine modification. At threonine 165 the chain carries Phosphothreonine. Position 166 is a phosphoserine (serine 166). One copy of the WD 1 repeat lies at 662–700 (GPTSGLPSPSYRFQGILPSSGSEDLLWKWDALEAYQSFV). 3 disordered regions span residues 1169–1196 (LGPGDAVTEKSHPSEEELLSQPGDFSEE), 1213–1240 (GYEADSESNPEDVDTQDDGVELNPEAEG), and 1482–1519 (ESAAERGKRVKKRNKPSVLEDSSFEGAEGDRPEVTESI). Over residues 1213 to 1232 (GYEADSESNPEDVDTQDDGV) the composition is skewed to acidic residues. Residues serine 1503 and serine 1504 each carry the phosphoserine modification. Residues 1576–1620 (SQENIFFPSKWQHLVLTYIQHPQGKKNVHGEISIWVSGQRKTDVI) form a WD 2 repeat. Serine 2099, serine 2118, serine 2203, serine 2207, and serine 2254 each carry phosphoserine. A disordered region spans residues 2177 to 2221 (ANGVSRGSPRFPRARVDHKDVGTEPRSDDDSPGDESYPRRPDNLK). Basic and acidic residues predominate over residues 2190–2205 (ARVDHKDVGTEPRSDD). 2 disordered regions span residues 2556 to 2581 (HDSESPVHSPSAHRHSVPPKRRSIAG) and 2659 to 2681 (NTSQSKTSVSQTEISEEDMHHEQ). A compositionally biased stretch (basic residues) spans 2566-2578 (SAHRHSVPPKRRS). A compositionally biased stretch (polar residues) spans 2659–2671 (NTSQSKTSVSQTE). Residues 2996–3102 (AASESIRVNR…VRDDVYQSIL (107 aa)) enclose the BEACH-type PH domain. Positions 3126–3409 (QITNFEYLTH…QLFHTAHASR (284 aa)) constitute a BEACH domain. WD repeat units follow at residues 3550 to 3589 (SQQHQVTSCAWVPDSCQLFTGSKCGVITAYTNRLTSSTPS), 3601 to 3640 (GHTEEITGLCVCKPYSVMISVSRDGTCIVWDLNRLCYVQS), 3643 to 3686 (GHKS…VGHV), 3687 to 3731 (HCRE…PVRE), and 3736 to 3775 (KSNKPIISLTFSCDGHHLYTANSEGTVIAWCRKDQQRVKL).

As to quaternary structure, interacts with CPAP, LIP8 and ZNF521. As to expression, expressed in the heart, lung, liver, spleen, brain and in different immune cell types (purified B and T lymphocytes, bone marrow-derived macrophages and dendritic cells).

Its subcellular location is the cytoplasm. Its function is as follows. Adapter protein that regulates and/or fission of intracellular vesicles such as lysosomes. Might regulate trafficking of effectors involved in exocytosis. In cytotoxic T-cells and natural killer (NK) cells, has role in the regulation of size, number and exocytosis of lytic granules. In macrophages and dendritic cells, regulates phagosome maturation by controlling the conversion of early phagosomal compartments into late phagosomes. In macrophages and dendritic cells, specifically involved in TLR3- and TLR4-induced production of pro-inflammatory cytokines by regulating the endosomal TLR3- TICAM1/TRIF and TLR4- TICAM1/TRIF signaling pathways. The polypeptide is Lysosomal-trafficking regulator (Lyst) (Mus musculus (Mouse)).